The primary structure comprises 281 residues: Sorbose reductase SOU1 (281 aa).

NADP(+) contacts are provided by Ile47, Lys74, and Asn119. Residues Ser173 and Tyr188 each act as proton donor in the active site. NADP(+)-binding residues include Tyr188, Lys192, Ile221, and Thr223. Lys192 serves as the catalytic Lowers pKa of active site Tyr.

This sequence belongs to the short-chain dehydrogenases/reductases (SDR) family. In terms of assembly, homotetramer.

It carries out the reaction D-sorbitol + NADP(+) = keto-L-sorbose + NADPH + H(+). It participates in carbohydrate degradation; L-sorbose degradation. Catalyzes the NADP dependent reduction of L-sorbose to D-glucitol. Can also convert fructose to mannitol, but less efficiently. This Candida albicans (strain SC5314 / ATCC MYA-2876) (Yeast) protein is Sorbose reductase SOU1 (SOU1).